We begin with the raw amino-acid sequence, 358 residues long: MKAALALEDGTYLEGKAFGAERGGLGEIVFCTSMTGYVEALTDPSYKGQILMMTYPLIGNYGVNREDFESDGVKVEGFVVKELCKNPSNWRSEMSVDELLKQYDVPGIEGVDTRMLTRKIRIYGSMKAAIGIGDVDREKLVRKAVEQPFISDIDLVDKVCVKEAKRFESDGDLEVVLVDCGVKMSIVRQLLKRGVNLTVVPYDFPAEKIKEMNPDGVFISNGPGDPARVKPTIETIRKLAGQIPMAGICLGHQLTALALGAKTFKLKFGHHGSNQPVKDFETGRVFISSQNHNFAVDTKTLPKEFEVTQINLNDHTVEGMVHKDFPLITVQYHPEAGPGPHDTYFFFDRYVDMLREYR.

Residues 1–172 form a CPSase region; the sequence is MKAALALEDG…EAKRFESDGD (172 aa). L-glutamine contacts are provided by S45, G222, and G224. A Glutamine amidotransferase type-1 domain is found at 174-358; it reads EVVLVDCGVK…RYVDMLREYR (185 aa). C249 functions as the Nucleophile in the catalytic mechanism. Positions 250, 253, 291, and 294 each coordinate L-glutamine. Active-site residues include H333 and E335.

The protein belongs to the CarA family. Composed of two chains; the small (or glutamine) chain promotes the hydrolysis of glutamine to ammonia, which is used by the large (or ammonia) chain to synthesize carbamoyl phosphate. Tetramer of heterodimers (alpha,beta)4.

The enzyme catalyses hydrogencarbonate + L-glutamine + 2 ATP + H2O = carbamoyl phosphate + L-glutamate + 2 ADP + phosphate + 2 H(+). It carries out the reaction L-glutamine + H2O = L-glutamate + NH4(+). The protein operates within amino-acid biosynthesis; L-arginine biosynthesis; carbamoyl phosphate from bicarbonate: step 1/1. It participates in pyrimidine metabolism; UMP biosynthesis via de novo pathway; (S)-dihydroorotate from bicarbonate: step 1/3. In terms of biological role, small subunit of the glutamine-dependent carbamoyl phosphate synthetase (CPSase). CPSase catalyzes the formation of carbamoyl phosphate from the ammonia moiety of glutamine, carbonate, and phosphate donated by ATP, constituting the first step of 2 biosynthetic pathways, one leading to arginine and/or urea and the other to pyrimidine nucleotides. The small subunit (glutamine amidotransferase) binds and cleaves glutamine to supply the large subunit with the substrate ammonia. The chain is Carbamoyl phosphate synthase small chain from Archaeoglobus fulgidus (strain ATCC 49558 / DSM 4304 / JCM 9628 / NBRC 100126 / VC-16).